Here is a 328-residue protein sequence, read N- to C-terminus: tRNA methyltransferase 10 homolog A (328 aa).

Disordered stretches follow at residues 1 to 91 (MSSE…RKRV) and 281 to 328 (HKAC…PVLQ). Ser-22 carries the phosphoserine modification. Residues 43-83 (RQLKKLMKQKQWEEQREQRKEKRKEKRKRKKLERRQLESNS) are a coiled coil. Residues 52–62 (KQWEEQREQRK) show a composition bias toward basic and acidic residues. The span at 63 to 75 (EKRKEKRKRKKLE) shows a compositional bias: basic residues. The SAM-dependent MTase TRM10-type domain occupies 88 to 278 (RKRVRRDVAR…TILPQRKGAV (191 aa)). Over residues 305-319 (ESCRDNPDSPQKDEQ) the composition is skewed to basic and acidic residues.

Belongs to the class IV-like SAM-binding methyltransferase superfamily. TRM10 family. In terms of assembly, interacts with tRNA.

Its subcellular location is the nucleus. The protein localises to the nucleolus. It carries out the reaction guanosine(9) in tRNA + S-adenosyl-L-methionine = N(1)-methylguanosine(9) in tRNA + S-adenosyl-L-homocysteine + H(+). In terms of biological role, S-adenosyl-L-methionine-dependent guanine N(1)-methyltransferase that catalyzes the formation of N(1)-methylguanine at position 9 (m1G9) in tRNAs. Probably not able to catalyze formation of N(1)-methyladenine at position 9 (m1A9) in tRNAs. This is tRNA methyltransferase 10 homolog A (Trmt10a) from Mus musculus (Mouse).